A 441-amino-acid chain; its full sequence is Ribulose bisphosphate carboxylase (441 aa).

The active-site Proton acceptor is the Lys160. Position 162 (Lys162) interacts with substrate. Lys186, Asp188, and Glu189 together coordinate Mg(2+). Position 186 is an N6-carboxylysine (Lys186). The active-site Proton acceptor is His278. Substrate-binding positions include Arg279, His311, 364-366 (SGG), and 386-389 (QVGG).

This sequence belongs to the RuBisCO large chain family. Type III subfamily. Homodimer. In contrast to form I RuBisCO, the form III RuBisCO is composed solely of large subunits. It depends on Mg(2+) as a cofactor.

The enzyme catalyses 2 (2R)-3-phosphoglycerate + 2 H(+) = D-ribulose 1,5-bisphosphate + CO2 + H2O. It carries out the reaction D-ribulose 1,5-bisphosphate + O2 = 2-phosphoglycolate + (2R)-3-phosphoglycerate + 2 H(+). With respect to regulation, reversibly inhibited by O(2). Its function is as follows. Catalyzes the addition of molecular CO(2) and H(2)O to ribulose 1,5-bisphosphate (RuBP), generating two molecules of 3-phosphoglycerate (3-PGA). Functions in an archaeal AMP degradation pathway, together with AMP phosphorylase and R15P isomerase. This Archaeoglobus fulgidus (strain ATCC 49558 / DSM 4304 / JCM 9628 / NBRC 100126 / VC-16) protein is Ribulose bisphosphate carboxylase.